The chain runs to 634 residues: Extracellular metalloproteinase MEP (634 aa).

An N-terminal signal peptide occupies residues 1-18; it reads MRGLLLAGALALPASVFA. Positions 19–245 are excised as a propeptide; that stretch reads HPAHQSYGLN…IHGVVDYVAE (227 aa). Zn(2+) is bound at residue His-429. Glu-430 is an active-site residue. His-433 is a Zn(2+) binding site.

It belongs to the peptidase M36 family. It depends on Zn(2+) as a cofactor.

It localises to the secreted. Functionally, secreted metalloproteinase that allows assimilation of proteinaceous substrates and probably acts as a virulence factor. The protein is Extracellular metalloproteinase MEP (MEP) of Neosartorya fischeri (strain ATCC 1020 / DSM 3700 / CBS 544.65 / FGSC A1164 / JCM 1740 / NRRL 181 / WB 181) (Aspergillus fischerianus).